The primary structure comprises 158 residues: Ribosomal RNA large subunit methyltransferase H (158 aa).

Residues leucine 73, glycine 107, and 126 to 131 (FGEITL) contribute to the S-adenosyl-L-methionine site.

It belongs to the RNA methyltransferase RlmH family. Homodimer.

It is found in the cytoplasm. The enzyme catalyses pseudouridine(1915) in 23S rRNA + S-adenosyl-L-methionine = N(3)-methylpseudouridine(1915) in 23S rRNA + S-adenosyl-L-homocysteine + H(+). In terms of biological role, specifically methylates the pseudouridine at position 1915 (m3Psi1915) in 23S rRNA. This is Ribosomal RNA large subunit methyltransferase H from Rubrobacter xylanophilus (strain DSM 9941 / JCM 11954 / NBRC 16129 / PRD-1).